The following is a 693-amino-acid chain: Elongation factor G (693 aa).

Positions 8–282 constitute a tr-type G domain; sequence KNTRNIGIMA…AAIEYLPSPL (275 aa). GTP contacts are provided by residues 17-24, 81-85, and 135-138; these read AHIDAGKT, DTPGH, and NKMD.

It belongs to the TRAFAC class translation factor GTPase superfamily. Classic translation factor GTPase family. EF-G/EF-2 subfamily.

The protein localises to the cytoplasm. Its function is as follows. Catalyzes the GTP-dependent ribosomal translocation step during translation elongation. During this step, the ribosome changes from the pre-translocational (PRE) to the post-translocational (POST) state as the newly formed A-site-bound peptidyl-tRNA and P-site-bound deacylated tRNA move to the P and E sites, respectively. Catalyzes the coordinated movement of the two tRNA molecules, the mRNA and conformational changes in the ribosome. The polypeptide is Elongation factor G (Macrococcus caseolyticus (strain JCSC5402) (Macrococcoides caseolyticum)).